Here is a 175-residue protein sequence, read N- to C-terminus: Crossover junction endodeoxyribonuclease RuvC (175 aa).

Active-site residues include D16, E76, and D148. Mg(2+)-binding residues include D16, E76, and D148.

The protein belongs to the RuvC family. In terms of assembly, homodimer which binds Holliday junction (HJ) DNA. The HJ becomes 2-fold symmetrical on binding to RuvC with unstacked arms; it has a different conformation from HJ DNA in complex with RuvA. In the full resolvosome a probable DNA-RuvA(4)-RuvB(12)-RuvC(2) complex forms which resolves the HJ. Requires Mg(2+) as cofactor.

The protein resides in the cytoplasm. It catalyses the reaction Endonucleolytic cleavage at a junction such as a reciprocal single-stranded crossover between two homologous DNA duplexes (Holliday junction).. Functionally, the RuvA-RuvB-RuvC complex processes Holliday junction (HJ) DNA during genetic recombination and DNA repair. Endonuclease that resolves HJ intermediates. Cleaves cruciform DNA by making single-stranded nicks across the HJ at symmetrical positions within the homologous arms, yielding a 5'-phosphate and a 3'-hydroxyl group; requires a central core of homology in the junction. The consensus cleavage sequence is 5'-(A/T)TT(C/G)-3'. Cleavage occurs on the 3'-side of the TT dinucleotide at the point of strand exchange. HJ branch migration catalyzed by RuvA-RuvB allows RuvC to scan DNA until it finds its consensus sequence, where it cleaves and resolves the cruciform DNA. The protein is Crossover junction endodeoxyribonuclease RuvC of Bradyrhizobium sp. (strain BTAi1 / ATCC BAA-1182).